Here is a 37-residue protein sequence, read N- to C-terminus: Large ribosomal subunit protein bL36 (37 aa).

Belongs to the bacterial ribosomal protein bL36 family.

The protein is Large ribosomal subunit protein bL36 of Laribacter hongkongensis (strain HLHK9).